Reading from the N-terminus, the 975-residue chain is Kinesin heavy chain (975 aa).

The Kinesin motor domain maps to 12–333 (SIKVVCRFRP…LDFGRRAKTV (322 aa)). 92-99 (GQTSSGKT) serves as a coordination point for ATP. A microtubule-binding region spans residues 180–321 (VSSPEDVFEV…PASFNESETK (142 aa)). Positions 335 to 931 (NVVCVNEELT…DRIKEAVRQK (597 aa)) form a coiled coil. Residues 810–891 (VAKELQTLHN…LPKLEKRLRC (82 aa)) form a necessary for associating with milt region. The segment at 932-975 (HLGRRGPQAQIAKPIRSGQGAIAIRGGGAVGGPSPLAQVNPVNS) is globular.

It belongs to the TRAFAC class myosin-kinesin ATPase superfamily. Kinesin family. Kinesin subfamily. As to quaternary structure, oligomer composed of two heavy chains and two light chains.

The protein localises to the cytoplasm. The protein resides in the cytoskeleton. Kinesin is a microtubule-associated force-producing protein that may play a role in organelle transport. Milt and Miro form an essential protein complex that links Khc to mitochondria for light chain-independent, anterograde transport of mitochondria. The protein is Kinesin heavy chain (Khc) of Drosophila melanogaster (Fruit fly).